Reading from the N-terminus, the 309-residue chain is UDP-N-acetylenolpyruvoylglucosamine reductase (309 aa).

In terms of domain architecture, FAD-binding PCMH-type spans 40–204 (LGGKVPLFAI…LQATFKLKKG (165 aa)). The active site involves Arg182. The Proton donor role is filled by Ser233. Residue Glu304 is part of the active site.

The protein belongs to the MurB family. Requires FAD as cofactor.

The protein resides in the cytoplasm. The enzyme catalyses UDP-N-acetyl-alpha-D-muramate + NADP(+) = UDP-N-acetyl-3-O-(1-carboxyvinyl)-alpha-D-glucosamine + NADPH + H(+). Its pathway is cell wall biogenesis; peptidoglycan biosynthesis. Its function is as follows. Cell wall formation. This is UDP-N-acetylenolpyruvoylglucosamine reductase from Fervidobacterium nodosum (strain ATCC 35602 / DSM 5306 / Rt17-B1).